Reading from the N-terminus, the 514-residue chain is 1-pyrroline-5-carboxylate dehydrogenase (514 aa).

Residues glutamate 286 and cysteine 320 contribute to the active site.

Belongs to the aldehyde dehydrogenase family. RocA subfamily.

The catalysed reaction is L-glutamate 5-semialdehyde + NAD(+) + H2O = L-glutamate + NADH + 2 H(+). It participates in amino-acid degradation; L-proline degradation into L-glutamate; L-glutamate from L-proline: step 2/2. The protein is 1-pyrroline-5-carboxylate dehydrogenase of Staphylococcus aureus (strain MRSA252).